The sequence spans 60 residues: MAVPKRKTTPSKRGMRRAHDALSSPVYIEDKDSGELRRPHHVDLKSGMYRGRQILEPKDD.

A compositionally biased stretch (basic residues) spans 1–16; the sequence is MAVPKRKTTPSKRGMR. The segment at 1–34 is disordered; it reads MAVPKRKTTPSKRGMRRAHDALSSPVYIEDKDSG.

Belongs to the bacterial ribosomal protein bL32 family.

The sequence is that of Large ribosomal subunit protein bL32 from Maricaulis maris (strain MCS10) (Caulobacter maris).